The sequence spans 293 residues: MTALDTLERVETAEIEKPIMQDKQIARGVEKITKTVGVPLTENAKFGIRGVDVFYGEKQAVFNVDLDIAKNQVIAMIGPSGCGKSTFLRCLNRMNDTIDICRVSGSITLDGMDIYDKQLDVVPLRARVGMVFQKPNPFPKSIYENVAYGPKIHGLASRRSDLDEIVETSLKKAGLWNEVKDRLHAPGTGLSGGQQQRLCIARTIAVSPEVILMDEPCSALDPIATAKIEELIAELSENFTIAIVTHSMQQAARVSHRTAYFHMGRLVEVNDTEKVFTNPDHELTEAYITGRFG.

Positions 46–288 (FGIRGVDVFY…PDHELTEAYI (243 aa)) constitute an ABC transporter domain. 78 to 85 (GPSGCGKS) provides a ligand contact to ATP.

This sequence belongs to the ABC transporter superfamily. Phosphate importer (TC 3.A.1.7) family. In terms of assembly, the complex is composed of two ATP-binding proteins (PstB), two transmembrane proteins (PstC and PstA) and a solute-binding protein (PstS).

Its subcellular location is the cell inner membrane. It carries out the reaction phosphate(out) + ATP + H2O = ADP + 2 phosphate(in) + H(+). In terms of biological role, part of the ABC transporter complex PstSACB involved in phosphate import. Responsible for energy coupling to the transport system. This is Phosphate import ATP-binding protein PstB from Saccharophagus degradans (strain 2-40 / ATCC 43961 / DSM 17024).